Consider the following 123-residue polypeptide: PTS system glucitol/sorbitol-specific EIIA component (123 aa).

Positions 3 to 116 (VIYQTTITRI…PDDIAPGSVL (114 aa)) constitute a PTS EIIA type-5 domain. His43 acts as the Tele-phosphohistidine intermediate in catalysis. His43 bears the Phosphohistidine; by HPr mark.

The protein resides in the cytoplasm. Functionally, the phosphoenolpyruvate-dependent sugar phosphotransferase system (sugar PTS), a major carbohydrate active transport system, catalyzes the phosphorylation of incoming sugar substrates concomitantly with their translocation across the cell membrane. The enzyme II complex composed of SrlA, SrlB and SrlE is involved in glucitol/sorbitol transport. It can also use D-mannitol. The protein is PTS system glucitol/sorbitol-specific EIIA component (srlB) of Escherichia coli (strain K12).